Here is a 423-residue protein sequence, read N- to C-terminus: MDIEKIEDLKKFVASCEENPSILLKPELSFFKDFIESFGGKIKKDKMGYEKMKSEDSTEEKSDEEEEDEEEEEEEEEDDDPEKLELIKEEAVECPPLAPIIEGELSEEQIEEICKLKEEAVDLVENKKYEEALEKYNKIISFGNPSAMIYTKRASILLNLKRPKACIRDCTEALNLNVDSANAYKIRAKAYRYLGKWEFAHADMEQGQKIDYDENLWDMQKLIQEKYKKIYEKRRYKINKEEEKQRLKREKELKKKLAAKKKAEKMYKENNKRENYDSDSSDSSYSEPDFSGDFPGGMPGGMPGMPGGMGGMGGMPGMPGGFPGMPGGMPGGMPGGMGGMPGMPGGMPGGMGGMPGMPGGMPDLNSPEMKELFNNPQFFQMMQNMMSNPDLINKYASDPKYKNIFENLKNSDLGGMMGEKPKP.

Residues 46 to 60 (KMGYEKMKSEDSTEE) are compositionally biased toward basic and acidic residues. A disordered region spans residues 46–82 (KMGYEKMKSEDSTEEKSDEEEEDEEEEEEEEEDDDPE). The segment covering 61–82 (KSDEEEEDEEEEEEEEEDDDPE) has biased composition (acidic residues). TPR repeat units lie at residues 113-146 (ICKLKEEAVDLVENKKYEEALEKYNKIISFGNPS), 147-180 (AMIYTKRASILLNLKRPKACIRDCTEALNLNVDS), and 181-214 (ANAYKIRAKAYRYLGKWEFAHADMEQGQKIDYDE). Residues 260-301 (KKKAEKMYKENNKRENYDSDSSDSSYSEPDFSGDFPGGMPGG) form a disordered region. Over residues 264 to 276 (EKMYKENNKRENY) the composition is skewed to basic and acidic residues. The 19 X 3-4 AA approximate repeats stretch occupies residues 292–362 (GDFPGGMPGG…GMPGMPGGMP (71 aa)). The 63-residue stretch at 361 to 423 (MPDLNSPEMK…GGMMGEKPKP (63 aa)) folds into the STI1 domain.

Its subcellular location is the cytoplasm. In terms of biological role, may play a role in protein folding or protein-protein interactions. May act as a co-chaperone. This Plasmodium berghei protein is 58 kDa phosphoprotein.